Here is a 60-residue protein sequence, read N- to C-terminus: Large ribosomal subunit protein bL32 (60 aa).

This sequence belongs to the bacterial ribosomal protein bL32 family.

The polypeptide is Large ribosomal subunit protein bL32 (Thermosipho africanus (strain TCF52B)).